A 235-amino-acid polypeptide reads, in one-letter code: 15,16-dihydrobiliverdin:ferredoxin oxidoreductase (235 aa).

The protein belongs to the HY2 family.

The catalysed reaction is 15,16-dihydrobiliverdin + oxidized 2[4Fe-4S]-[ferredoxin] = biliverdin IXalpha + reduced 2[4Fe-4S]-[ferredoxin] + 2 H(+). Its function is as follows. Catalyzes the two-electron reduction of biliverdin IX-alpha at the C15 methine bridge. The chain is 15,16-dihydrobiliverdin:ferredoxin oxidoreductase from Synechococcus sp. (strain CC9902).